The primary structure comprises 335 residues: Holliday junction branch migration complex subunit RuvB (335 aa).

Positions 1–183 (MDERIISSET…FGVIDHLEFY (183 aa)) are large ATPase domain (RuvB-L). ATP-binding positions include L22, R23, G64, K67, T68, T69, 130–132 (EDY), R173, Y183, and R220. T68 serves as a coordination point for Mg(2+). Positions 184–254 (TEEQLTEIVL…LAKEALTLLQ (71 aa)) are small ATPAse domain (RuvB-S). Positions 257–335 (PRGLDTIDQK…HLGISYEKEV (79 aa)) are head domain (RuvB-H). R293, R312, and R317 together coordinate DNA.

It belongs to the RuvB family. In terms of assembly, homohexamer. Forms an RuvA(8)-RuvB(12)-Holliday junction (HJ) complex. HJ DNA is sandwiched between 2 RuvA tetramers; dsDNA enters through RuvA and exits via RuvB. An RuvB hexamer assembles on each DNA strand where it exits the tetramer. Each RuvB hexamer is contacted by two RuvA subunits (via domain III) on 2 adjacent RuvB subunits; this complex drives branch migration. In the full resolvosome a probable DNA-RuvA(4)-RuvB(12)-RuvC(2) complex forms which resolves the HJ.

It localises to the cytoplasm. The enzyme catalyses ATP + H2O = ADP + phosphate + H(+). Functionally, the RuvA-RuvB-RuvC complex processes Holliday junction (HJ) DNA during genetic recombination and DNA repair, while the RuvA-RuvB complex plays an important role in the rescue of blocked DNA replication forks via replication fork reversal (RFR). RuvA specifically binds to HJ cruciform DNA, conferring on it an open structure. The RuvB hexamer acts as an ATP-dependent pump, pulling dsDNA into and through the RuvAB complex. RuvB forms 2 homohexamers on either side of HJ DNA bound by 1 or 2 RuvA tetramers; 4 subunits per hexamer contact DNA at a time. Coordinated motions by a converter formed by DNA-disengaged RuvB subunits stimulates ATP hydrolysis and nucleotide exchange. Immobilization of the converter enables RuvB to convert the ATP-contained energy into a lever motion, pulling 2 nucleotides of DNA out of the RuvA tetramer per ATP hydrolyzed, thus driving DNA branch migration. The RuvB motors rotate together with the DNA substrate, which together with the progressing nucleotide cycle form the mechanistic basis for DNA recombination by continuous HJ branch migration. Branch migration allows RuvC to scan DNA until it finds its consensus sequence, where it cleaves and resolves cruciform DNA. The chain is Holliday junction branch migration complex subunit RuvB from Listeria monocytogenes serotype 4b (strain CLIP80459).